A 214-amino-acid chain; its full sequence is UPF0502 protein Pput_3252 (214 aa).

The protein belongs to the UPF0502 family.

This is UPF0502 protein Pput_3252 from Pseudomonas putida (strain ATCC 700007 / DSM 6899 / JCM 31910 / BCRC 17059 / LMG 24140 / F1).